The following is a 164-amino-acid chain: Protein SprT (164 aa).

Residues 14-156 enclose the SprT-like domain; the sequence is QQAETFFKRT…LCRRCREPLV (143 aa). His-69 lines the Zn(2+) pocket. The active site involves Glu-70. Residue His-73 participates in Zn(2+) binding.

The protein belongs to the SprT family. Zn(2+) serves as cofactor.

Its subcellular location is the cytoplasm. This Pseudomonas savastanoi pv. phaseolicola (strain 1448A / Race 6) (Pseudomonas syringae pv. phaseolicola (strain 1448A / Race 6)) protein is Protein SprT.